The following is a 345-amino-acid chain: Ryncolin-4 (345 aa).

An N-terminal signal peptide occupies residues 1–19 (MKPWAAFHLIFLVASSLEG). Residues 48–118 (ILQSQPGIPG…DKGDKGEDCN (71 aa)) are disordered. One can recognise a Collagen-like domain in the interval 57 to 114 (GIPGVPGTNGSEGLKGDPGPQGPPGIRGPDGIRGEAGPKGDKGDQGDKGDKGDKGDKG). The span at 86-116 (DGIRGEAGPKGDKGDQGDKGDKGDKGDKGED) shows a compositional bias: basic and acidic residues. A Fibrinogen C-terminal domain is found at 121-339 (DCLPTEVRNC…YADMKIRPQK (219 aa)). 2 disulfide bridges follow: cysteine 130–cysteine 158 and cysteine 282–cysteine 295.

This sequence belongs to the ficolin lectin family. Veficolin subfamily. Hydroxylated, possibly at Pro-80. Expressed by the venom duct.

Its subcellular location is the secreted. In terms of biological role, initiates complement activation and/or interferes in platelet aggregation and/or blood coagulation. The polypeptide is Ryncolin-4 (Cerberus rynchops (Dog-faced water snake)).